A 385-amino-acid chain; its full sequence is Glucose-fructose oxidoreductase domain-containing protein 2 (385 aa).

Positions 1-25 (MKMLPGVGVFGTGSSARVLVPLLRA) are cleaved as a signal peptide.

It belongs to the Gfo/Idh/MocA family.

Its subcellular location is the secreted. It localises to the extracellular space. The protein resides in the extracellular matrix. Functionally, promotes matrix assembly. The sequence is that of Glucose-fructose oxidoreductase domain-containing protein 2 (GFOD2) from Homo sapiens (Human).